The sequence spans 514 residues: Type-2 serine--tRNA ligase (514 aa).

Alanine 313 provides a ligand contact to L-serine. Cysteine 315 provides a ligand contact to Zn(2+). Arginine 344 provides a ligand contact to L-serine. ATP contacts are provided by residues 344 to 346 (RWE) and 355 to 356 (RV). Residue 361-363 (RGE) participates in L-serine binding. Zn(2+)-binding residues include glutamate 363 and cysteine 470. ATP is bound at residue arginine 477.

It belongs to the class-II aminoacyl-tRNA synthetase family. Type-2 seryl-tRNA synthetase subfamily. As to quaternary structure, homodimer. Zn(2+) serves as cofactor.

Its subcellular location is the cytoplasm. It catalyses the reaction tRNA(Ser) + L-serine + ATP = L-seryl-tRNA(Ser) + AMP + diphosphate + H(+). The catalysed reaction is tRNA(Sec) + L-serine + ATP = L-seryl-tRNA(Sec) + AMP + diphosphate + H(+). It functions in the pathway aminoacyl-tRNA biosynthesis; selenocysteinyl-tRNA(Sec) biosynthesis; L-seryl-tRNA(Sec) from L-serine and tRNA(Sec): step 1/1. Its function is as follows. Catalyzes the attachment of serine to tRNA(Ser). Is also able to aminoacylate tRNA(Sec) with serine, to form the misacylated tRNA L-seryl-tRNA(Sec), which will be further converted into selenocysteinyl-tRNA(Sec). This Methanococcus maripaludis (strain C6 / ATCC BAA-1332) protein is Type-2 serine--tRNA ligase.